We begin with the raw amino-acid sequence, 1241 residues long: DNA-directed RNA polymerase subunit beta (1241 aa).

Residues 1186–1210 (EDEIVPTAEKRSSNQDEEALELVDN) are disordered. Over residues 1200 to 1210 (QDEEALELVDN) the composition is skewed to acidic residues.

It belongs to the RNA polymerase beta chain family. The RNAP catalytic core consists of 2 alpha, 1 beta, 1 beta' and 1 omega subunit. When a sigma factor is associated with the core the holoenzyme is formed, which can initiate transcription.

It catalyses the reaction RNA(n) + a ribonucleoside 5'-triphosphate = RNA(n+1) + diphosphate. Its function is as follows. DNA-dependent RNA polymerase catalyzes the transcription of DNA into RNA using the four ribonucleoside triphosphates as substrates. The sequence is that of DNA-directed RNA polymerase subunit beta from Clostridium novyi (strain NT).